Consider the following 216-residue polypeptide: Adenylate kinase (216 aa).

Residue 10-15 (GAGKGT) coordinates ATP. An NMP region spans residues 30–59 (STGDMFRAAMKAETEMGLQAKSFIDKGALV). AMP contacts are provided by residues Thr31, Arg36, 57–59 (ALV), 85–88 (GFPR), and Gln92. An LID region spans residues 126-163 (GRRICKECGATYHLEFNAPAKADVCDKCGGELYQRSDD). Arg127 contributes to the ATP binding site. 2 residues coordinate Zn(2+): Cys130 and Cys133. Position 136 to 137 (136 to 137 (TY)) interacts with ATP. Zn(2+) is bound by residues Cys150 and Cys153. Arg160 and Arg171 together coordinate AMP. Gln199 serves as a coordination point for ATP.

This sequence belongs to the adenylate kinase family. As to quaternary structure, monomer.

Its subcellular location is the cytoplasm. It catalyses the reaction AMP + ATP = 2 ADP. The protein operates within purine metabolism; AMP biosynthesis via salvage pathway; AMP from ADP: step 1/1. In terms of biological role, catalyzes the reversible transfer of the terminal phosphate group between ATP and AMP. Plays an important role in cellular energy homeostasis and in adenine nucleotide metabolism. The sequence is that of Adenylate kinase from Bacillus anthracis (strain A0248).